Consider the following 183-residue polypeptide: Adenine phosphoribosyltransferase (183 aa).

The protein belongs to the purine/pyrimidine phosphoribosyltransferase family. Homodimer.

The protein localises to the cytoplasm. The enzyme catalyses AMP + diphosphate = 5-phospho-alpha-D-ribose 1-diphosphate + adenine. It participates in purine metabolism; AMP biosynthesis via salvage pathway; AMP from adenine: step 1/1. Its function is as follows. Catalyzes a salvage reaction resulting in the formation of AMP, that is energically less costly than de novo synthesis. This Klebsiella pneumoniae subsp. pneumoniae (strain ATCC 700721 / MGH 78578) protein is Adenine phosphoribosyltransferase.